Reading from the N-terminus, the 532-residue chain is 2,3-bisphosphoglycerate-independent phosphoglycerate mutase (532 aa).

Residues D15 and S65 each contribute to the Mn(2+) site. The active-site Phosphoserine intermediate is the S65. Residues H126, 156–157 (RD), R188, R194, 258–261 (RPDR), and K331 each bind substrate. The Mn(2+) site is built by D398, H402, D439, H440, and H457.

It belongs to the BPG-independent phosphoglycerate mutase family. Monomer. It depends on Mn(2+) as a cofactor.

It carries out the reaction (2R)-2-phosphoglycerate = (2R)-3-phosphoglycerate. Its pathway is carbohydrate degradation; glycolysis; pyruvate from D-glyceraldehyde 3-phosphate: step 3/5. In terms of biological role, catalyzes the interconversion of 2-phosphoglycerate and 3-phosphoglycerate. In Gloeothece citriformis (strain PCC 7424) (Cyanothece sp. (strain PCC 7424)), this protein is 2,3-bisphosphoglycerate-independent phosphoglycerate mutase.